A 303-amino-acid polypeptide reads, in one-letter code: MRIGGVEVTKFASEMMSSSSSSAVEMLNLKEASNWWSDVNESPIWQDRIFHVLAVLYGIVSLVAVIQLVRIQLRVPEYGWTTQKVFHFLNFVVNGVRAVVFVFRRNVQFMQPEILQHILLDIPSLAFFTTYALLVLFWAEIYYQARAVSTDGLRPSFFTINAVVYVVQIALWLVLWWKPVRVMVILSKMFFAGVSLFAALGFLLYGGRLFLMLQRFPVESKGRRKKLQEVGYVTTICFTCFLIRCIMMCFAAFDEGANLDVLDHPILNFIYYLLVEILPSSLVLFILRKLPPKRGITQYHQIR.

The Extracellular portion of the chain corresponds to 1-48; the sequence is MRIGGVEVTKFASEMMSSSSSSAVEMLNLKEASNWWSDVNESPIWQDR. Residues 49–69 traverse the membrane as a helical segment; it reads IFHVLAVLYGIVSLVAVIQLV. The Cytoplasmic segment spans residues 70–82; sequence RIQLRVPEYGWTT. Residues 83-103 form a helical membrane-spanning segment; sequence QKVFHFLNFVVNGVRAVVFVF. The Extracellular portion of the chain corresponds to 104 to 117; it reads RRNVQFMQPEILQH. Residues 118–138 form a helical membrane-spanning segment; it reads ILLDIPSLAFFTTYALLVLFW. Residues 139 to 156 are Cytoplasmic-facing; that stretch reads AEIYYQARAVSTDGLRPS. The chain crosses the membrane as a helical span at residues 157–177; it reads FFTINAVVYVVQIALWLVLWW. The Extracellular segment spans residues 178 to 183; it reads KPVRVM. A helical transmembrane segment spans residues 184–204; sequence VILSKMFFAGVSLFAALGFLL. At 205–232 the chain is on the cytoplasmic side; sequence YGGRLFLMLQRFPVESKGRRKKLQEVGY. A helical transmembrane segment spans residues 233–253; that stretch reads VTTICFTCFLIRCIMMCFAAF. At 254 to 265 the chain is on the extracellular side; that stretch reads DEGANLDVLDHP. A helical membrane pass occupies residues 266–286; sequence ILNFIYYLLVEILPSSLVLFI. Over 287-303 the chain is Cytoplasmic; it reads LRKLPPKRGITQYHQIR.

Belongs to the plant tobamovirus multiplication TOM1 protein family. As to quaternary structure, constituent of tobamovirus replication complex. Interacts with the helicase domain of tobamovirus-encoded replication proteins.

The protein localises to the vacuole membrane. Its function is as follows. Contributes to the intracellular multiplication of tobamoviruses, probably being a membrane anchor promoting the formation of the replication complex. The protein is Tobamovirus multiplication protein 3 (TOM3) of Arabidopsis thaliana (Mouse-ear cress).